We begin with the raw amino-acid sequence, 689 residues long: Methionine--tRNA ligase (689 aa).

The short motif at 15–25 is the 'HIGH' region element; the sequence is PYANGPIHLGH. Zn(2+) is bound by residues C146, C149, C159, and C162. The 'KMSKS' region motif lies at 332-336; that stretch reads KMSKS. K335 contacts ATP. One can recognise a tRNA-binding domain in the interval 588–689; that stretch reads DFAKIDLRIA…EGAQPGMRVK (102 aa).

The protein belongs to the class-I aminoacyl-tRNA synthetase family. MetG type 1 subfamily. In terms of assembly, homodimer. It depends on Zn(2+) as a cofactor.

Its subcellular location is the cytoplasm. It catalyses the reaction tRNA(Met) + L-methionine + ATP = L-methionyl-tRNA(Met) + AMP + diphosphate. Functionally, is required not only for elongation of protein synthesis but also for the initiation of all mRNA translation through initiator tRNA(fMet) aminoacylation. The polypeptide is Methionine--tRNA ligase (Shewanella baltica (strain OS155 / ATCC BAA-1091)).